The following is a 500-amino-acid chain: Glycerol kinase (500 aa).

Thr16 serves as a coordination point for ADP. Residues Thr16 and Thr17 each contribute to the ATP site. Thr16 contributes to the sn-glycerol 3-phosphate binding site. Arg20 lines the ADP pocket. Residues Arg86, Glu87, Tyr138, and Asp243 each coordinate sn-glycerol 3-phosphate. 5 residues coordinate glycerol: Arg86, Glu87, Tyr138, Asp243, and Gln244. 2 residues coordinate ADP: Thr265 and Gly313. ATP contacts are provided by Thr265, Gly313, Gln317, and Gly414. Gly414 and Asn418 together coordinate ADP.

The protein belongs to the FGGY kinase family.

It catalyses the reaction glycerol + ATP = sn-glycerol 3-phosphate + ADP + H(+). It functions in the pathway polyol metabolism; glycerol degradation via glycerol kinase pathway; sn-glycerol 3-phosphate from glycerol: step 1/1. Inhibited by fructose 1,6-bisphosphate (FBP). Its function is as follows. Key enzyme in the regulation of glycerol uptake and metabolism. Catalyzes the phosphorylation of glycerol to yield sn-glycerol 3-phosphate. The chain is Glycerol kinase from Trichormus variabilis (strain ATCC 29413 / PCC 7937) (Anabaena variabilis).